We begin with the raw amino-acid sequence, 479 residues long: MNAAVMTSSTNFSDYVIADLSLSVWGDKEIRIAETEMPGLMAIREEFAAAQPLKGARITGSIHMTIQTAVLIQTLEALGAKVRWASCNIYSTQDHAAAAIAAAGTPVFAVKGETLDDYWEYTHRIFEWPNDDKGAPVYSNMILDDGGDATLLLHLGTRAEKDASVLNNPGSEEEICLFNSIKKHLAVDATWYSKRLPQILGVTEETTTGVHRLYQMHKEGKLAFPAINVNDSVTKSKFDNLYGCRESLVDGIKRATDVMIAGKVAVIAGYGDVGKGSAQAMRALSAQVWVTEIDPICALQAAMEGYRVVTMDYAAEHGDIFVTCTGNYHVITHDHMAKMKDQAIVCNIGHFDNEIEVAALKQYTWENIKPQVDHIIFPDGKRIILLAEGRLVNLGCGTGHPSYVMSSSFANQTIAQIELYANTKNYPVGVYTLPKHLDEKVARLQLKKLNSQLTTLTDEQANYIGVQKAGPYKPEHYRY.

Substrate-binding residues include threonine 65, aspartate 145, and glutamate 205. 206–208 (TTT) lines the NAD(+) pocket. Lysine 235 and aspartate 239 together coordinate substrate. NAD(+)-binding positions include asparagine 240, 269 to 274 (GYGDVG), glutamate 292, asparagine 327, 348 to 350 (IGH), and asparagine 393.

It belongs to the adenosylhomocysteinase family. Requires NAD(+) as cofactor.

It is found in the cytoplasm. The enzyme catalyses S-adenosyl-L-homocysteine + H2O = L-homocysteine + adenosine. The protein operates within amino-acid biosynthesis; L-homocysteine biosynthesis; L-homocysteine from S-adenosyl-L-homocysteine: step 1/1. In terms of biological role, may play a key role in the regulation of the intracellular concentration of adenosylhomocysteine. The sequence is that of Adenosylhomocysteinase from Herminiimonas arsenicoxydans.